A 182-amino-acid polypeptide reads, in one-letter code: Lipid A acyltransferase PagP (182 aa).

Residues 1–21 (MTQYFRSLAFFLLPVPATAMA) form the signal peptide. Residue Cys-22 is the site of N-palmitoyl cysteine attachment. Residue Cys-22 is the site of S-diacylglycerol cysteine attachment. Catalysis depends on residues His-55, Asp-98, and Ser-99.

Belongs to the lipid A palmitoyltransferase family. Homodimer.

The protein resides in the cell outer membrane. The catalysed reaction is a lipid A + a 1,2-diacyl-sn-glycero-3-phosphocholine = a hepta-acyl lipid A + a 2-acyl-sn-glycero-3-phosphocholine. It catalyses the reaction a lipid IVA + a 1,2-diacyl-sn-glycero-3-phosphocholine = a lipid IVB + a 2-acyl-sn-glycero-3-phosphocholine. It carries out the reaction a lipid IIA + a 1,2-diacyl-sn-glycero-3-phosphocholine = a lipid IIB + a 2-acyl-sn-glycero-3-phosphocholine. Functionally, transfers a fatty acid residue from the sn-1 position of a phospholipid to the N-linked hydroxyfatty acid chain on the proximal unit of lipid A or its precursors. The chain is Lipid A acyltransferase PagP from Bordetella pertussis (strain CS).